Here is a 419-residue protein sequence, read N- to C-terminus: Phosphatidylcholine:ceramide cholinephosphotransferase 1 (419 aa).

Residues 13 to 76 form the SAM domain; the sequence is WSPKKVADWL…LDMIETLKME (64 aa). Phosphoserine is present on serine 14. Transmembrane regions (helical) follow at residues 142-162, 190-210, 221-241, 282-302, and 310-330; these read LLAF…ISVV, FSIC…QWLL, FFCI…VTTL, MCGD…YLFI, and LWWY…CILL. Residue histidine 291 is part of the active site. The Cytoplasmic portion of the chain corresponds to 331–419; sequence AHDHYTVDVV…VKYSRLVNDT (89 aa). Active-site residues include histidine 334 and aspartate 338.

It belongs to the sphingomyelin synthase family.

It is found in the golgi apparatus membrane. The catalysed reaction is an N-acylsphing-4-enine + a 1,2-diacyl-sn-glycero-3-phosphocholine = a sphingomyelin + a 1,2-diacyl-sn-glycerol. It catalyses the reaction 1-(9Z-octadecenoyl)-2-acyl-sn-3-glycerol + a sphingomyelin = a 1-(9Z-octadecenoyl)-2-acyl-sn-glycero-3-phosphocholine + an N-acylsphing-4-enine. It carries out the reaction N-hexadecanoylsphinganine + a 1,2-diacyl-sn-glycero-3-phosphocholine = N-hexadecanoyl-sphinganine-1-phosphocholine + a 1,2-diacyl-sn-glycerol. The enzyme catalyses N-hexadecanoyl-(4R)-hydroxysphinganine + a 1,2-diacyl-sn-glycero-3-phosphocholine = N-hexadecanoyl-(4R)-hydroxysphinganine-phosphocholine + a 1,2-diacyl-sn-glycerol. The catalysed reaction is an N-acylsphing-4-enine + a 1,2-diacyl-sn-glycero-3-phosphoethanolamine = an N-acylsphing-4-enine 1-phosphoethanolamine + a 1,2-diacyl-sn-glycerol. It functions in the pathway sphingolipid metabolism. In terms of biological role, major sphingomyelin synthase at the Golgi apparatus. Catalyzes the reversible transfer of phosphocholine moiety in sphingomyelin biosynthesis: in the forward reaction transfers phosphocholine head group of phosphatidylcholine (PC) on to ceramide (CER) to form ceramide phosphocholine (sphingomyelin, SM) and diacylglycerol (DAG) as by-product, and in the reverse reaction transfers phosphocholine from SM to DAG to form PC and CER. The direction of the reaction depends on the levels of CER and DAG in Golgi membranes. Converts the newly synthesized CER, that is transported from the endoplasmic reticulum to the trans-Golgi by the Cer transport protein (CERT), to SM. Can form a heteromeric complex with glucosylceramide synthase (GCS) increasing SMS activity and reducing glucosylceramide synthesis, a critical mechanism that controls the metabolic fate of CER in the Golgi. Does not use free phosphorylcholine or CDP-choline as donor. Can also transfer phosphoethanolamine head group of phosphatidylethanolamine (PE) on to CER to form ceramide phosphoethanolamine (CPE). Regulates receptor-mediated signal transduction via mitogenic DAG and proapoptotic CER, as well as via SM, a structural component of membrane rafts that serve as platforms for signal transduction and protein sorting. Plays a role in secretory transport via regulation of DAG pool at the Golgi apparatus and its downstream effects on PRKD1. This Rattus norvegicus (Rat) protein is Phosphatidylcholine:ceramide cholinephosphotransferase 1 (Sgms1).